The primary structure comprises 862 residues: Probable disease resistance protein At5g43740 (862 aa).

Residues 24–61 (RNYIHMMESNLDALQKTMEELKNGRDDLLGRVSIEEDK) are a coiled coil. Positions 135 to 438 (MVAQEIIHKV…CEGFINPNRY (304 aa)) constitute an NB-ARC domain. Residue 178 to 185 (GMGGVGKT) participates in ATP binding. LRR repeat units follow at residues 511 to 532 (IVRT…SKCP), 533 to 555 (NLST…FFRF), 558 to 580 (KLVV…ISNL), and 582 to 604 (SLQY…KKLR).

The protein belongs to the disease resistance NB-LRR family.

Its function is as follows. Probable disease resistance protein. This chain is Probable disease resistance protein At5g43740, found in Arabidopsis thaliana (Mouse-ear cress).